We begin with the raw amino-acid sequence, 284 residues long: Tropomyosin alpha-1 chain (284 aa).

The residue at position 1 (methionine 1) is an N-acetylmethionine. Residues 1-38 are disordered; that stretch reads MDAIKKKMQMLKLDKENALDRAEQAEADKKAAEDRSKQ. The stretch at 1–284 forms a coiled coil; that stretch reads MDAIKKKMQM…DHALNDMTSI (284 aa). A compositionally biased stretch (basic and acidic residues) spans 12–38; the sequence is KLDKENALDRAEQAEADKKAAEDRSKQ. Phosphoserine occurs at positions 31, 45, and 51. The tract at residues 116–136 is disordered; the sequence is AEKAADESERGMKVIESRAQK. Serine 174, serine 186, and serine 206 each carry phosphoserine. N6-acetyllysine is present on lysine 213. Residue serine 252 is modified to Phosphoserine. At tyrosine 261 the chain carries Phosphotyrosine. Serine 271 carries the phosphoserine modification. Serine 283 bears the Phosphoserine; by DAPK1 mark.

The protein belongs to the tropomyosin family. As to quaternary structure, homodimer. Heterodimer of an alpha (TPM1, TPM3 or TPM4) and a beta (TPM2) chain. Interacts with HRG (via the HRR domain); the interaction contributes to the antiangiogenic properties of the histidine/proline-rich region (HRR) of HRG. Interacts (via N-terminus) with LMOD2 (via N-terminus) and TMOD1 (via N-terminus). Post-translationally, phosphorylated at Ser-283 by DAPK1 in response to oxidative stress and this phosphorylation enhances stress fiber formation in endothelial cells. Detected in primary breast cancer tissues but undetectable in normal breast tissues in Sudanese patients. Isoform 1 is expressed in adult and fetal skeletal muscle and cardiac tissues, with higher expression levels in the cardiac tissues. Isoform 10 is expressed in adult and fetal cardiac tissues, but not in skeletal muscle.

The protein resides in the cytoplasm. It localises to the cytoskeleton. In terms of biological role, binds to actin filaments in muscle and non-muscle cells. Plays a central role, in association with the troponin complex, in the calcium dependent regulation of vertebrate striated muscle contraction. Smooth muscle contraction is regulated by interaction with caldesmon. In non-muscle cells is implicated in stabilizing cytoskeleton actin filaments. The sequence is that of Tropomyosin alpha-1 chain (TPM1) from Homo sapiens (Human).